The primary structure comprises 170 residues: ATP synthase F(1) complex subunit delta, mitochondrial (170 aa).

The transit peptide at 1-33 directs the protein to the mitochondrion; it reads MIRSIIKSSNNLLKSNVAINSNKRFFATEASAT.

It belongs to the ATPase epsilon chain family. In terms of assembly, component of the ATP synthase complex composed at least of ATP5F1A/subunit alpha, ATP5F1B/subunit beta, ATP5MC1/subunit c (homooctomer), MT-ATP6/subunit a, MT-ATP8/subunit 8, ATP5ME/subunit e, ATP5MF/subunit f, ATP5MG/subunit g, ATP5MK/subunit k, ATP5MJ/subunit j, ATP5F1C/subunit gamma, ATP5F1D/subunit delta, ATP5F1E/subunit epsilon, ATP5PF/subunit F6, ATP5PB/subunit b, ATP5PD/subunit d, ATP5PO/subunit OSCP. ATP synthase complex consists of a soluble F(1) head domain (subunits alpha(3) and beta(3)) - the catalytic core - and a membrane F(0) domain - the membrane proton channel (subunits c, a, 8, e, f, g, k and j). These two domains are linked by a central stalk (subunits gamma, delta, and epsilon) rotating inside the F1 region and a stationary peripheral stalk (subunits F6, b, d, and OSCP).

It localises to the mitochondrion. Its subcellular location is the mitochondrion inner membrane. Functionally, subunit delta, of the mitochondrial membrane ATP synthase complex (F(1)F(0) ATP synthase or Complex V) that produces ATP from ADP in the presence of a proton gradient across the membrane which is generated by electron transport complexes of the respiratory chain. ATP synthase complex consist of a soluble F(1) head domain - the catalytic core - and a membrane F(1) domain - the membrane proton channel. These two domains are linked by a central stalk rotating inside the F(1) region and a stationary peripheral stalk. During catalysis, ATP synthesis in the catalytic domain of F(1) is coupled via a rotary mechanism of the central stalk subunits to proton translocation. In vivo, can only synthesize ATP although its ATP hydrolase activity can be activated artificially in vitro. With the central stalk subunit gamma, is essential for the biogenesis of F(1) catalytic part of the ATP synthase complex namely in the formation of F1 assembly intermediate. The sequence is that of ATP synthase F(1) complex subunit delta, mitochondrial from Dictyostelium discoideum (Social amoeba).